Here is a 196-residue protein sequence, read N- to C-terminus: Peptide methionine sulfoxide reductase (196 aa).

Positions 1-14 (MEGNNSSSKSTTNP) are enriched in polar residues. Positions 1–23 (MEGNNSSSKSTTNPALDPDLDSP) are disordered.

The protein belongs to the MsrA Met sulfoxide reductase family.

It carries out the reaction L-methionyl-[protein] + [thioredoxin]-disulfide + H2O = L-methionyl-(S)-S-oxide-[protein] + [thioredoxin]-dithiol. The catalysed reaction is [thioredoxin]-disulfide + L-methionine + H2O = L-methionine (S)-S-oxide + [thioredoxin]-dithiol. Has an important function as a repair enzyme for proteins that have been inactivated by oxidation. Catalyzes the reversible oxidation-reduction of methionine sulfoxide in proteins to methionine. This is Peptide methionine sulfoxide reductase (E4) from Solanum lycopersicum (Tomato).